The chain runs to 314 residues: Melanocyte-stimulating hormone receptor (314 aa).

Residues 1-35 (MSMLAPLRLVREPWNASEGNQSNATAGAGGAWCQG) lie on the Extracellular side of the membrane. N-linked (GlcNAc...) asparagine glycosylation is found at N15, N20, and N23. A helical transmembrane segment spans residues 36–61 (LDIPNELFLTLGLVSLVENLLVVAAI). Topologically, residues 62–70 (LKNRNLHSP) are cytoplasmic. The chain crosses the membrane as a helical span at residues 71 to 91 (TYYFICCLAVSDMLVSVSNLA). The Extracellular segment spans residues 92–116 (KTLFMLLMEHGVLVIRASIVRHMDN). Residues 117–138 (VIDMLICSSVVSSLSFLGVIAV) traverse the membrane as a helical segment. Residues 139–161 (DRYITIFYALRYHSIMTLQRAVV) are Cytoplasmic-facing. The helical transmembrane segment at 162-181 (TMASVWLASTVSSTVLITYY) threads the bilayer. At 182–189 (RNNAILLC) the chain is on the extracellular side. Residues 190–209 (LIGFFLFMLVLMLVLYIHMF) form a helical membrane-spanning segment. The Cytoplasmic portion of the chain corresponds to 210 to 237 (ALACHHVRSISSQQKQPTIYRTSSLKGA). The helical transmembrane segment at 238–263 (VTLTILLGVFFICWGPFFFHLILIVT) threads the bilayer. The Extracellular portion of the chain corresponds to 264 to 276 (CPTNPFCTCFFSY). Residues 277–297 (FNLFLILIICNSVVDPLIYAF) traverse the membrane as a helical segment. Over 298–314 (RSQELRRTLREVVLCSW) the chain is Cytoplasmic. C312 carries the S-palmitoyl cysteine lipid modification.

This sequence belongs to the G-protein coupled receptor 1 family.

The protein resides in the cell membrane. Receptor for MSH (alpha, beta and gamma) and ACTH. The activity of this receptor is mediated by G proteins which activate adenylate cyclase. Mediates melanogenesis via regulation of cAMP signaling in melanocytes. The polypeptide is Melanocyte-stimulating hormone receptor (MC1R) (Gallus gallus (Chicken)).